A 250-amino-acid polypeptide reads, in one-letter code: tRNA (guanine-N(1)-)-methyltransferase (250 aa).

S-adenosyl-L-methionine-binding positions include glycine 114 and 134–139 (IGDYVL).

This sequence belongs to the RNA methyltransferase TrmD family. As to quaternary structure, homodimer.

Its subcellular location is the cytoplasm. The enzyme catalyses guanosine(37) in tRNA + S-adenosyl-L-methionine = N(1)-methylguanosine(37) in tRNA + S-adenosyl-L-homocysteine + H(+). Functionally, specifically methylates guanosine-37 in various tRNAs. This Moorella thermoacetica (strain ATCC 39073 / JCM 9320) protein is tRNA (guanine-N(1)-)-methyltransferase.